The chain runs to 270 residues: 5'-AMP-activated protein kinase subunit beta-1 (270 aa).

A disordered region spans residues 1–43 (MGNTSSERAALERHGGHKTPRRDSSGGTKDGDRPKILMDSPED). Residue Gly-2 is the site of N-myristoyl glycine attachment. The residue at position 4 (Thr-4) is a Phosphothreonine. A phosphoserine mark is found at Ser-5 and Ser-6. Thr-19 bears the Phosphothreonine mark. A compositionally biased stretch (basic and acidic residues) spans 21–36 (RRDSSGGTKDGDRPKI). 2 positions are modified to phosphoserine; by autocatalysis: Ser-24 and Ser-25. Phosphoserine is present on residues Ser-40, Ser-96, Ser-101, and Ser-108. The glycogen-binding domain stretch occupies residues 68–163 (EVNDKAPAQA…QVKKTDFEVF (96 aa)). Position 148 is a phosphothreonine (Thr-148). Ser-182 carries the phosphoserine modification.

Belongs to the 5'-AMP-activated protein kinase beta subunit family. AMPK is a heterotrimer of an alpha catalytic subunit (PRKAA1 or PRKAA2), a beta (PRKAB1 or PRKAB2) and a gamma non-catalytic subunits (PRKAG1, PRKAG2 or PRKAG3). Interacts with FNIP1 and FNIP2. In terms of processing, phosphorylated when associated with the catalytic subunit (PRKAA1 or PRKAA2). Phosphorylated by ULK1; leading to negatively regulate AMPK activity and suggesting the existence of a regulatory feedback loop between ULK1 and AMPK.

Non-catalytic subunit of AMP-activated protein kinase (AMPK), an energy sensor protein kinase that plays a key role in regulating cellular energy metabolism. In response to reduction of intracellular ATP levels, AMPK activates energy-producing pathways and inhibits energy-consuming processes: inhibits protein, carbohydrate and lipid biosynthesis, as well as cell growth and proliferation. AMPK acts via direct phosphorylation of metabolic enzymes, and by longer-term effects via phosphorylation of transcription regulators. Also acts as a regulator of cellular polarity by remodeling the actin cytoskeleton; probably by indirectly activating myosin. Beta non-catalytic subunit acts as a scaffold on which the AMPK complex assembles, via its C-terminus that bridges alpha (PRKAA1 or PRKAA2) and gamma subunits (PRKAG1, PRKAG2 or PRKAG3). This is 5'-AMP-activated protein kinase subunit beta-1 (PRKAB1) from Homo sapiens (Human).